The chain runs to 918 residues: Glutamate receptor ionotropic, kainate 1 (918 aa).

A signal peptide spans 1 to 30 (MEHGTLLAQPGLWTRDTSWALLYFLCYILP). Residues 31 to 576 (QTAPQVLRIG…VFSFLNPLSP (546 aa)) are Extracellular-facing. N-linked (GlcNAc...) asparagine glycosylation is found at Asn68, Asn74, Asn276, Asn379, Asn428, Asn439, and Asn446. L-glutamate is bound by residues Pro531, Thr533, and Arg538. N-linked (GlcNAc...) asparagine glycosylation is present at Asn561. A helical transmembrane segment spans residues 577–597 (DIWMYVLLACLGVSCVLFVIA). At 598 to 653 (RFTPYEWYNPHPCNPDSDVVENNFTLLNSFWFGVGALMQQGSELMPKALSTRIVGG) the chain is on the cytoplasmic side. A helical membrane pass occupies residues 654–674 (IWWFFTLIIISSYTANLAAFL). The Extracellular portion of the chain corresponds to 675 to 834 (TVERMESPID…KEASALGVEN (160 aa)). The L-glutamate site is built by Ser704 and Thr705. Ser725 carries the phosphoserine; by PKC modification. Position 753 (Glu753) interacts with L-glutamate. Residue Thr761 is modified to Phosphothreonine; by PKC. A disulfide bridge connects residues Cys765 and Cys819. N-linked (GlcNAc...) asparagine glycosylation occurs at Asn766. A helical transmembrane segment spans residues 835–855 (IGGIFIVLAAGLVLSVFVAIG). The Cytoplasmic portion of the chain corresponds to 856-918 (EFIYKSRKNN…IRKQSSVHTV (63 aa)).

It belongs to the glutamate-gated ion channel (TC 1.A.10.1) family. GRIK1 subfamily. Homotetramer or heterotetramer of pore-forming glutamate receptor subunits. Tetramers may be formed by the dimerization of dimers. Can form functional heteromeric receptors with GRIK5. Can form functional heteromeric receptors with GRIK4. Interacts with KLHL17.

It localises to the cell membrane. Its subcellular location is the postsynaptic cell membrane. The catalysed reaction is Ca(2+)(in) = Ca(2+)(out). Functionally, ionotropic glutamate receptor that functions as a cation-permeable ligand-gated ion channel, gated by L-glutamate and the glutamatergic agonist kainic acid. L-glutamate acts as an excitatory neurotransmitter at many synapses in the central nervous system. Binding of the excitatory neurotransmitter L-glutamate induces a conformation change, leading to the opening of the cation channel, and thereby converts the chemical signal to an electrical impulse. The receptor then desensitizes rapidly and enters a transient inactive state, characterized by the presence of bound agonist. Ionotropic glutamate receptor that functions as a cation-permeable ligand-gated ion channel, gated by L-glutamate and the glutamatergic agonist kainic acid. The polypeptide is Glutamate receptor ionotropic, kainate 1 (GRIK1) (Homo sapiens (Human)).